The following is a 396-amino-acid chain: NAD(P)H oxidoreductase RTN4IP1, mitochondrial (396 aa).

The transit peptide at 1-40 (MEFLKTCVLRRNACTAVCFWRSKVVQKPSVRRISTTSPRS) directs the protein to the mitochondrion. The Enoyl reductase (ER) domain maps to 52 to 393 (GKNEVLRFTQ…RGHARGKTVI (342 aa)). NADPH-binding residues include S214, G216, V217, S237, Y255, N276, L300, A341, F343, H386, A387, and R388.

Belongs to the zinc-containing alcohol dehydrogenase family. Quinone oxidoreductase subfamily. As to quaternary structure, interacts with RTN4, UQCRC1 and UQCRC2. As to expression, widely expressed in mitochondria-enriched tissues. Found in heart, muscle, kidney, liver, brain and placenta.

Its subcellular location is the mitochondrion matrix. It localises to the mitochondrion outer membrane. The enzyme catalyses a 3-demethylubiquinone + NADH + 2 H(+) = a 3-demethylubiquinol + NAD(+). The catalysed reaction is a 3-demethylubiquinone + NADPH + 2 H(+) = a 3-demethylubiquinol + NADP(+). It catalyses the reaction 3-demethylubiquinone-10 + NADH + 2 H(+) = 3-demethylubiquinol-10 + NAD(+). It carries out the reaction 3-demethylubiquinone-10 + NADPH + 2 H(+) = 3-demethylubiquinol-10 + NADP(+). Its pathway is cofactor biosynthesis; ubiquinone biosynthesis. In terms of biological role, NAD(P)H oxidoreductase involved in the ubiquinone biosynthetic pathway. Required for the O-methyltransferase activity of COQ3. Able to catalyze the oxidoreduction of 3-demethylubiquinone into 3-demethylubiquinol in vitro. However, it is unclear if 3-demethylubiquinone constitutes a substrate in vivo. May also play a role in the regulation of retinal ganglion cell (RGC) neurite outgrowth, and hence in the development of the inner retina and optic nerve. Appears to be a potent inhibitor of regeneration following spinal cord injury. The protein is NAD(P)H oxidoreductase RTN4IP1, mitochondrial of Homo sapiens (Human).